A 383-amino-acid polypeptide reads, in one-letter code: Histidinol-phosphate aminotransferase (383 aa).

Lysine 240 is subject to N6-(pyridoxal phosphate)lysine.

Belongs to the class-II pyridoxal-phosphate-dependent aminotransferase family. Histidinol-phosphate aminotransferase subfamily. Homodimer. Requires pyridoxal 5'-phosphate as cofactor.

The catalysed reaction is L-histidinol phosphate + 2-oxoglutarate = 3-(imidazol-4-yl)-2-oxopropyl phosphate + L-glutamate. It functions in the pathway amino-acid biosynthesis; L-histidine biosynthesis; L-histidine from 5-phospho-alpha-D-ribose 1-diphosphate: step 7/9. The chain is Histidinol-phosphate aminotransferase from Oleidesulfovibrio alaskensis (strain ATCC BAA-1058 / DSM 17464 / G20) (Desulfovibrio alaskensis).